The following is a 201-amino-acid chain: Large ribosomal subunit protein bL25 (201 aa).

It belongs to the bacterial ribosomal protein bL25 family. CTC subfamily. In terms of assembly, part of the 50S ribosomal subunit; part of the 5S rRNA/L5/L18/L25 subcomplex. Contacts the 5S rRNA. Binds to the 5S rRNA independently of L5 and L18.

Its function is as follows. This is one of the proteins that binds to the 5S RNA in the ribosome where it forms part of the central protuberance. The polypeptide is Large ribosomal subunit protein bL25 (Burkholderia cenocepacia (strain HI2424)).